We begin with the raw amino-acid sequence, 348 residues long: Methylthioribose-1-phosphate isomerase (348 aa).

Substrate-binding positions include 51 to 53 (RGA), Arg94, and Gln199. Asp240 serves as the catalytic Proton donor. 250–251 (NK) is a binding site for substrate.

This sequence belongs to the eIF-2B alpha/beta/delta subunits family. MtnA subfamily.

The enzyme catalyses 5-(methylsulfanyl)-alpha-D-ribose 1-phosphate = 5-(methylsulfanyl)-D-ribulose 1-phosphate. Its pathway is amino-acid biosynthesis; L-methionine biosynthesis via salvage pathway; L-methionine from S-methyl-5-thio-alpha-D-ribose 1-phosphate: step 1/6. Its function is as follows. Catalyzes the interconversion of methylthioribose-1-phosphate (MTR-1-P) into methylthioribulose-1-phosphate (MTRu-1-P). This is Methylthioribose-1-phosphate isomerase from Nitrosococcus oceani (strain ATCC 19707 / BCRC 17464 / JCM 30415 / NCIMB 11848 / C-107).